The sequence spans 350 residues: Chemokine C-C motif receptor-like 2 (350 aa).

Topologically, residues 1–43 are extracellular; that stretch reads MANYTSAPEDDYDVFIEDDLSNDERELCSPYDPQALLAQLVPY. The N-linked (GlcNAc...) asparagine glycan is linked to Asn-3. A helical membrane pass occupies residues 44-64; sequence LFITVFLVGLLDNILVVLIMV. At 65–74 the chain is on the cytoplasmic side; it reads KYKGLKQVEN. Residues 75-95 form a helical membrane-spanning segment; that stretch reads IYLLNLAVCNLCFLCTLPFWV. The Extracellular segment spans residues 96 to 110; sequence HMAWHEGDPGEPLCK. Cys-109 and Cys-187 are joined by a disulfide. Residues 111-131 form a helical membrane-spanning segment; that stretch reads ILLVLYSVGLFSEAFFNVLLT. Residues 132-149 lie on the Cytoplasmic side of the membrane; the sequence is VQRYQKFFQMRGFFSATR. A helical transmembrane segment spans residues 150 to 170; the sequence is MVAGSIFPSALVWVIAVLVML. The Extracellular segment spans residues 171 to 204; the sequence is PELAFYKPQMENQKYKCFFGRPLFLPADETFWKH. The chain crosses the membrane as a helical span at residues 205 to 225; that stretch reads FLTLKMNILGFLLPLFVFVFC. At 226–244 the chain is on the cytoplasmic side; it reads YVRMRRTLKFGERGYDLFK. The chain crosses the membrane as a helical span at residues 245-265; the sequence is LVFTIMVVFLLMWGPYNIALF. Over 266-288 the chain is Extracellular; that stretch reads LSAFNEHFSLHGCESSHNLDRST. The chain crosses the membrane as a helical span at residues 289–309; the sequence is LITKIIATTHCCVNPLLYVFF. Over 310 to 350 the chain is Cytoplasmic; sequence DEAFRKHLYHFCHLCNDTAPQPTEEPAQGTSREEPCLSTKM. The segment at 329 to 350 is disordered; the sequence is PQPTEEPAQGTSREEPCLSTKM.

This sequence belongs to the G-protein coupled receptor 1 family.

It localises to the cell membrane. In terms of biological role, receptor for CCL19 and chemerin/RARRES2. Does not appear to be a signaling receptor, but may have a role in modulating chemokine-triggered immune responses by capturing and internalizing CCL19 or by presenting RARRES2 ligand to CMKLR1, a functional signaling receptor. Plays a critical role for the development of Th2 responses. This Sus scrofa (Pig) protein is Chemokine C-C motif receptor-like 2 (CCRL2).